The following is a 371-amino-acid chain: MPHQQILILFGLLPVATNISTWWNFGSMLLACSSMQVLTGFFLAVHYTANINLAFSSIMHITRDVPYGWMMQNLHAIGASMFFICIYTHIARGLYYGSYLNKKTWLSGTTLLIMLMATAFFGYVLPWGQMSFWAATVITNLLTAIPYLGTTMTTWLWGGFAINDPTLTRFFALHFILPFGIISLSSLHIMLLHEDGSSNPLGTNSDIDKIPFHPYHTYKDMLMLSLMILALLMTVAFFPDIFNDPENFSKANPLVTPQHIKPEWYFLFAYGILRSIPNKLGGALALVMSIMILLTAPFTHTSAIRSMTFRPIMQLMFWTLVATFAVITWAATKPVEPPFTTISQVASTMYFMFFITNPIMGWFENKIMKYN.

A run of 4 helical transmembrane segments spans residues 25 to 45 (FGSM…FLAV), 69 to 90 (WMMQ…YTHI), 105 to 125 (WLSG…GYVL), and 170 to 190 (FFAL…LHIM). Heme b contacts are provided by His75 and His89. Heme b contacts are provided by His174 and His188. His193 provides a ligand contact to a ubiquinone. 4 helical membrane-spanning segments follow: residues 218 to 238 (YKDM…VAFF), 280 to 300 (LGGA…PFTH), 312 to 332 (IMQL…WAAT), and 339 to 358 (FTTI…ITNP).

This sequence belongs to the cytochrome b family. The cytochrome bc1 complex contains 3 respiratory subunits (MT-CYB, CYC1 and UQCRFS1), 2 core proteins (UQCRC1 and UQCRC2) and probably 6 low-molecular weight proteins. The cofactor is heme b.

It localises to the mitochondrion inner membrane. Functionally, component of the ubiquinol-cytochrome c reductase complex (complex III or cytochrome b-c1 complex) that is part of the mitochondrial respiratory chain. The b-c1 complex mediates electron transfer from ubiquinol to cytochrome c. Contributes to the generation of a proton gradient across the mitochondrial membrane that is then used for ATP synthesis. This chain is Cytochrome b (MT-CYB), found in Eryx colubrinus colubrinus.